Here is a 373-residue protein sequence, read N- to C-terminus: tRNA/tmRNA (uracil-C(5))-methyltransferase (373 aa).

Glutamine 190, tyrosine 219, asparagine 224, glutamate 240, and aspartate 300 together coordinate S-adenosyl-L-methionine. The Nucleophile role is filled by cysteine 325. Glutamate 359 (proton acceptor) is an active-site residue.

This sequence belongs to the class I-like SAM-binding methyltransferase superfamily. RNA M5U methyltransferase family. TrmA subfamily.

The catalysed reaction is uridine(54) in tRNA + S-adenosyl-L-methionine = 5-methyluridine(54) in tRNA + S-adenosyl-L-homocysteine + H(+). It catalyses the reaction uridine(341) in tmRNA + S-adenosyl-L-methionine = 5-methyluridine(341) in tmRNA + S-adenosyl-L-homocysteine + H(+). Its function is as follows. Dual-specificity methyltransferase that catalyzes the formation of 5-methyluridine at position 54 (m5U54) in all tRNAs, and that of position 341 (m5U341) in tmRNA (transfer-mRNA). The protein is tRNA/tmRNA (uracil-C(5))-methyltransferase of Chromohalobacter salexigens (strain ATCC BAA-138 / DSM 3043 / CIP 106854 / NCIMB 13768 / 1H11).